The following is a 172-amino-acid chain: R-phycocyanin-2 beta chain (172 aa).

Residue Asn-72 is modified to N4-methylasparagine. Cys-82 is a binding site for (2R,3E)-phycocyanobilin. A (2R,3E)-phycoerythrobilin-binding site is contributed by Cys-153.

Belongs to the phycobiliprotein family. In terms of assembly, heterodimer of an alpha and a beta chain. Post-translationally, contains two covalently linked bilin chromophores.

Its subcellular location is the cellular thylakoid membrane. Its function is as follows. Light-harvesting photosynthetic bile pigment-protein from the phycobiliprotein complex. The protein is R-phycocyanin-2 beta chain (rpcB) of Synechococcus sp. (strain WH8103).